The primary structure comprises 124 residues: Superoxide reductase (124 aa).

The Fe cation site is built by E14, H16, H41, H47, C111, and H114.

This sequence belongs to the desulfoferrodoxin family. Homotetramer. Fe cation is required as a cofactor.

The enzyme catalyses reduced [rubredoxin] + superoxide + 2 H(+) = oxidized [rubredoxin] + H2O2. Uses electrons from reduced NADP, by way of rubredoxin and an oxidoreductase, to catalyze the reduction of superoxide to hydrogen peroxide. In Pyrococcus furiosus (strain ATCC 43587 / DSM 3638 / JCM 8422 / Vc1), this protein is Superoxide reductase (sorA).